We begin with the raw amino-acid sequence, 356 residues long: MASKKQRIGVLTSGGDAPGLNAVIRAVVKSASSLGWEVIGIHDGFEGLLGTKSYRVLTNADVQGLLPRGGTILRTTNKGHFGPRRSDELSEADPYVRAVKAIEEMGLRALITIGGEGTQRIALELHKLGAPVIGVPKTIDNDLAGTDRTFGFDTALQVATDAIDRLHTTAASHNRVMVLEVMGRHTGWIALHAGLAGGADVILIPEIPFTIERVAEKVHARDAQGSAFSIIVVAEGARPRGGSEMYIAEGRLGGIGHWVGEQLERLTGKDVRVVVLGHLQRGGSPSPYDRLLSTRYGAAAVQAAARGIYGEMVALRGQDIVTVPLAEACGYLNRVRPHSDLVLCARSLGIVFGDEL.

Residues glycine 15, 78–79, and 115–118 contribute to the ATP site; these read KG and GEGT. Residue glutamate 116 coordinates Mg(2+). Residues 138–140, arginine 175, 182–184, glutamate 235, arginine 272, and 278–281 each bind substrate; these read TID, MGR, and HLQR. Aspartate 140 serves as the catalytic Proton acceptor.

Belongs to the phosphofructokinase type A (PFKA) family. Mixed-substrate PFK group III subfamily. Homodimer or homotetramer. Mg(2+) serves as cofactor.

Its subcellular location is the cytoplasm. The enzyme catalyses beta-D-fructose 6-phosphate + ATP = beta-D-fructose 1,6-bisphosphate + ADP + H(+). It functions in the pathway carbohydrate degradation; glycolysis; D-glyceraldehyde 3-phosphate and glycerone phosphate from D-glucose: step 3/4. In terms of biological role, catalyzes the phosphorylation of D-fructose 6-phosphate to fructose 1,6-bisphosphate by ATP, the first committing step of glycolysis. The protein is ATP-dependent 6-phosphofructokinase of Chloroflexus aggregans (strain MD-66 / DSM 9485).